The primary structure comprises 110 residues: Replication initiation control protein YabA (110 aa).

Zn(2+) contacts are provided by His84, Cys86, Cys100, and Cys103.

Belongs to the YabA family. Homotetramer. Interacts with both DnaA and DnaN, acting as a bridge between these two proteins. Zn(2+) is required as a cofactor.

It is found in the cytoplasm. The protein localises to the nucleoid. Involved in control of chromosome replication initiation. Inhibits the cooperative binding of DnaA to the oriC region, thus negatively regulating initiation of chromosome replication. Inhibits the ability of DnaA-ATP to form a helix on DNA; does not disassemble preformed DnaA-DNA helices. Decreases the residence time of DnaA on the chromosome at its binding sites (oriC, replication forks and promoter-binding sites). Tethers DnaA to the replication machinery via the DNA polymerase beta sliding clamp subunit (dnaN). Associates with oriC and other DnaA targets on the chromosome in a DnaA-dependent manner. In Streptococcus mutans serotype c (strain ATCC 700610 / UA159), this protein is Replication initiation control protein YabA.